The sequence spans 135 residues: Large ribosomal subunit protein eL32 (135 aa).

Lysine 9 participates in a covalent cross-link: Glycyl lysine isopeptide (Lys-Gly) (interchain with G-Cter in SUMO2). Lysine 50 is subject to N6-succinyllysine. Serine 62 is modified (phosphoserine).

It belongs to the eukaryotic ribosomal protein eL32 family. Component of the large ribosomal subunit.

The protein resides in the cytoplasm. Its function is as follows. Component of the large ribosomal subunit. The ribosome is a large ribonucleoprotein complex responsible for the synthesis of proteins in the cell. The polypeptide is Large ribosomal subunit protein eL32 (RPL32) (Macaca fascicularis (Crab-eating macaque)).